A 252-amino-acid polypeptide reads, in one-letter code: Ribosomal RNA small subunit methyltransferase J (252 aa).

S-adenosyl-L-methionine-binding positions include 101-102 (RD), 117-118 (ER), 153-154 (SS), and aspartate 171.

This sequence belongs to the methyltransferase superfamily. RsmJ family.

It is found in the cytoplasm. It carries out the reaction guanosine(1516) in 16S rRNA + S-adenosyl-L-methionine = N(2)-methylguanosine(1516) in 16S rRNA + S-adenosyl-L-homocysteine + H(+). Specifically methylates the guanosine in position 1516 of 16S rRNA. The polypeptide is Ribosomal RNA small subunit methyltransferase J (Salmonella paratyphi B (strain ATCC BAA-1250 / SPB7)).